The primary structure comprises 72 residues: Aurein-2.2 (72 aa).

The signal sequence occupies residues 1 to 22; the sequence is MAFLKKSLFLVLFLGLVSLSIC. Positions 23–49 are excised as a propeptide; that stretch reads EKEKRQNEEDEDENEAANHEEGSEEKR. The interval 27 to 47 is disordered; that stretch reads RQNEEDEDENEAANHEEGSEE. Residues 38–47 show a composition bias toward basic and acidic residues; that stretch reads AANHEEGSEE. Leu65 carries the leucine amide modification. Residues 69 to 72 constitute a propeptide that is removed on maturation; the sequence is NDLE.

Post-translationally, amidation is essential for antibacterial activity against Gram-positive bacteria. In terms of tissue distribution, expressed by the skin dorsal glands.

The protein localises to the secreted. Its subcellular location is the target cell membrane. Amphipathic alpha-helical antimicrobial peptide with weak to moderate activity against Gram-positive bacteria, and no activity against Gram-negative bacteria. Probably acts by disturbing membrane functions with its amphipathic structure. Strongly inhibits the formation of NO by neuronal nitric oxide synthase (nNOS) at micromolar concentrations. Acts by a non-competitive mechanism, probably by binding to calcium/calmodulin and as a consequence blocking calmodulin attachment to nNOS. The protein is Aurein-2.2 of Ranoidea aurea (Green and golden bell frog).